A 419-amino-acid chain; its full sequence is Light-independent protochlorophyllide reductase subunit N (419 aa).

[4Fe-4S] cluster contacts are provided by Cys17, Cys42, and Cys103.

This sequence belongs to the BchN/ChlN family. As to quaternary structure, protochlorophyllide reductase is composed of three subunits; ChlL, ChlN and ChlB. Forms a heterotetramer of two ChlB and two ChlN subunits. [4Fe-4S] cluster serves as cofactor.

The enzyme catalyses chlorophyllide a + oxidized 2[4Fe-4S]-[ferredoxin] + 2 ADP + 2 phosphate = protochlorophyllide a + reduced 2[4Fe-4S]-[ferredoxin] + 2 ATP + 2 H2O. Its pathway is porphyrin-containing compound metabolism; chlorophyll biosynthesis (light-independent). In terms of biological role, component of the dark-operative protochlorophyllide reductase (DPOR) that uses Mg-ATP and reduced ferredoxin to reduce ring D of protochlorophyllide (Pchlide) to form chlorophyllide a (Chlide). This reaction is light-independent. The NB-protein (ChlN-ChlB) is the catalytic component of the complex. The polypeptide is Light-independent protochlorophyllide reductase subunit N (Prochlorococcus marinus (strain NATL1A)).